The sequence spans 308 residues: UDP-3-O-acyl-N-acetylglucosamine deacetylase (308 aa).

Residues His-78, His-235, and Asp-239 each coordinate Zn(2+). His-262 serves as the catalytic Proton donor.

It belongs to the LpxC family. The cofactor is Zn(2+).

The enzyme catalyses a UDP-3-O-[(3R)-3-hydroxyacyl]-N-acetyl-alpha-D-glucosamine + H2O = a UDP-3-O-[(3R)-3-hydroxyacyl]-alpha-D-glucosamine + acetate. The protein operates within glycolipid biosynthesis; lipid IV(A) biosynthesis; lipid IV(A) from (3R)-3-hydroxytetradecanoyl-[acyl-carrier-protein] and UDP-N-acetyl-alpha-D-glucosamine: step 2/6. Its function is as follows. Catalyzes the hydrolysis of UDP-3-O-myristoyl-N-acetylglucosamine to form UDP-3-O-myristoylglucosamine and acetate, the committed step in lipid A biosynthesis. The sequence is that of UDP-3-O-acyl-N-acetylglucosamine deacetylase from Anaeromyxobacter dehalogenans (strain 2CP-C).